A 157-amino-acid polypeptide reads, in one-letter code: 2-C-methyl-D-erythritol 2,4-cyclodiphosphate synthase (157 aa).

A divalent metal cation is bound by residues D9 and H11. Residues 9 to 11 (DVH) and 35 to 36 (HS) contribute to the 4-CDP-2-C-methyl-D-erythritol 2-phosphate site. H43 provides a ligand contact to a divalent metal cation. 4-CDP-2-C-methyl-D-erythritol 2-phosphate contacts are provided by residues 57-59 (DIG), 62-66 (FPDTD), 101-107 (AEKPKMA), 133-136 (TTTE), F140, and R143.

The protein belongs to the IspF family. In terms of assembly, homotrimer. A divalent metal cation is required as a cofactor.

It carries out the reaction 4-CDP-2-C-methyl-D-erythritol 2-phosphate = 2-C-methyl-D-erythritol 2,4-cyclic diphosphate + CMP. Its pathway is isoprenoid biosynthesis; isopentenyl diphosphate biosynthesis via DXP pathway; isopentenyl diphosphate from 1-deoxy-D-xylulose 5-phosphate: step 4/6. Involved in the biosynthesis of isopentenyl diphosphate (IPP) and dimethylallyl diphosphate (DMAPP), two major building blocks of isoprenoid compounds. Catalyzes the conversion of 4-diphosphocytidyl-2-C-methyl-D-erythritol 2-phosphate (CDP-ME2P) to 2-C-methyl-D-erythritol 2,4-cyclodiphosphate (ME-CPP) with a corresponding release of cytidine 5-monophosphate (CMP). The sequence is that of 2-C-methyl-D-erythritol 2,4-cyclodiphosphate synthase from Listeria monocytogenes serotype 4b (strain F2365).